A 376-amino-acid polypeptide reads, in one-letter code: Chaperone protein DnaJ (376 aa).

A J domain is found at 4–68; that stretch reads DYYDILGVDR…DTRSRYDQFG (65 aa). The segment at 135-217 adopts a CR-type zinc-finger fold; it reads GGEKEIRIPH…CNGAGRRQVT (83 aa). Residues cysteine 148, cysteine 151, cysteine 165, cysteine 168, cysteine 191, cysteine 194, cysteine 205, and cysteine 208 each coordinate Zn(2+). CXXCXGXG motif repeat units follow at residues 148-155, 165-172, 191-198, and 205-212; these read CQVCKGDG, CSTCNGQG, CPACNGQG, and CEVCNGAG.

Belongs to the DnaJ family. Homodimer. Zn(2+) serves as cofactor.

The protein resides in the cytoplasm. Its function is as follows. Participates actively in the response to hyperosmotic and heat shock by preventing the aggregation of stress-denatured proteins and by disaggregating proteins, also in an autonomous, DnaK-independent fashion. Unfolded proteins bind initially to DnaJ; upon interaction with the DnaJ-bound protein, DnaK hydrolyzes its bound ATP, resulting in the formation of a stable complex. GrpE releases ADP from DnaK; ATP binding to DnaK triggers the release of the substrate protein, thus completing the reaction cycle. Several rounds of ATP-dependent interactions between DnaJ, DnaK and GrpE are required for fully efficient folding. Also involved, together with DnaK and GrpE, in the DNA replication of plasmids through activation of initiation proteins. The polypeptide is Chaperone protein DnaJ (Crocosphaera subtropica (strain ATCC 51142 / BH68) (Cyanothece sp. (strain ATCC 51142))).